The sequence spans 634 residues: Threonine--tRNA ligase (634 aa).

One can recognise a TGS domain in the interval 1–61 (MINIRFPDGS…NSNCELRLIT (61 aa)). The tract at residues 241–532 (DHRKIGKVLD…LIEHYAGNLP (292 aa)) is catalytic. Positions 332, 383, and 509 each coordinate Zn(2+).

Belongs to the class-II aminoacyl-tRNA synthetase family. Homodimer. Requires Zn(2+) as cofactor.

The protein localises to the cytoplasm. The catalysed reaction is tRNA(Thr) + L-threonine + ATP = L-threonyl-tRNA(Thr) + AMP + diphosphate + H(+). Functionally, catalyzes the attachment of threonine to tRNA(Thr) in a two-step reaction: L-threonine is first activated by ATP to form Thr-AMP and then transferred to the acceptor end of tRNA(Thr). Also edits incorrectly charged L-seryl-tRNA(Thr). The sequence is that of Threonine--tRNA ligase from Francisella tularensis subsp. tularensis (strain FSC 198).